The primary structure comprises 303 residues: Uridylate-specific endoribonuclease C (303 aa).

The N-terminal stretch at 1–16 is a signal peptide; the sequence is MVYLVFLCLLPSLISG. The 272-residue stretch at 32 to 303 folds into the EndoU domain; that stretch reads TDAEIQSLAE…KRFVASSYPI (272 aa). Active-site residues include histidine 181, histidine 196, and lysine 239. Residue asparagine 287 is glycosylated (N-linked (GlcNAc...) asparagine).

Belongs to the ENDOU family. Monomer. The cofactor is Mn(2+).

Its subcellular location is the secreted. The enzyme catalyses ribonucleotidyl-uridine-RNA = a 5'-end dephospho-uridine-RNA + a 3'-end 2',3'-cyclophospho-ribonucleotide-RNA. In terms of biological role, endoribonuclease that cleaves single-stranded RNAs at 5' of uridylates and releases a product with a 2',3'-cyclic phosphate at the 3'-end. The polypeptide is Uridylate-specific endoribonuclease C (endou-c) (Xenopus laevis (African clawed frog)).